Consider the following 132-residue polypeptide: Large ribosomal subunit protein eL28 (132 aa).

It belongs to the eukaryotic ribosomal protein eL28 family.

This chain is Large ribosomal subunit protein eL28 (rpl28), found in Dictyostelium discoideum (Social amoeba).